The following is an 89-amino-acid chain: Small ribosomal subunit protein bS20 (89 aa).

Residues methionine 1 to histidine 10 show a composition bias toward basic residues. The interval methionine 1–threonine 30 is disordered. Basic and acidic residues predominate over residues asparagine 11–threonine 30.

The protein belongs to the bacterial ribosomal protein bS20 family.

Binds directly to 16S ribosomal RNA. The sequence is that of Small ribosomal subunit protein bS20 from Treponema denticola (strain ATCC 35405 / DSM 14222 / CIP 103919 / JCM 8153 / KCTC 15104).